Here is a 103-residue protein sequence, read N- to C-terminus: Gibberellin-regulated protein 13 (103 aa).

An N-terminal signal peptide occupies residues 1–20 (MATKLSIIVFSIVVLHLLLS).

Belongs to the GASA family. Post-translationally, six disulfide bonds may be present.

Its subcellular location is the secreted. Functionally, gibberellin-regulated protein that may function in hormonal controlled steps of development such as seed germination, flowering and seed maturation. This chain is Gibberellin-regulated protein 13 (GASA13), found in Arabidopsis thaliana (Mouse-ear cress).